A 461-amino-acid polypeptide reads, in one-letter code: Mitochondrial distribution and morphology protein 12 (461 aa).

Residues 1–454 (MSLDLDWNLL…YPNYYTIDLP (454 aa)) enclose the SMP-LTD domain. Disordered stretches follow at residues 75 to 104 (RRRG…VHHG) and 226 to 301 (DASS…PSSA). Polar residues-rich tracts occupy residues 80–97 (RQTT…SPTD) and 272–288 (RATS…QNSP).

Belongs to the MDM12 family. Component of the ER-mitochondria encounter structure (ERMES) or MDM complex, composed of MMM1, MDM10, MDM12 and MDM34. An MMM1 homodimer associates with one molecule of MDM12 on each side in a pairwise head-to-tail manner, and the SMP-LTD domains of MMM1 and MDM12 generate a continuous hydrophobic tunnel for phospholipid trafficking.

Its subcellular location is the mitochondrion outer membrane. It is found in the endoplasmic reticulum membrane. Its function is as follows. Component of the ERMES/MDM complex, which serves as a molecular tether to connect the endoplasmic reticulum (ER) and mitochondria. Components of this complex are involved in the control of mitochondrial shape and protein biogenesis, and function in nonvesicular lipid trafficking between the ER and mitochondria. MDM12 is required for the interaction of the ER-resident membrane protein MMM1 and the outer mitochondrial membrane-resident beta-barrel protein MDM10. The MDM12-MMM1 subcomplex functions in the major beta-barrel assembly pathway that is responsible for biogenesis of all mitochondrial outer membrane beta-barrel proteins, and acts in a late step after the SAM complex. The MDM10-MDM12-MMM1 subcomplex further acts in the TOM40-specific pathway after the action of the MDM12-MMM1 complex. Essential for establishing and maintaining the structure of mitochondria and maintenance of mtDNA nucleoids. The protein is Mitochondrial distribution and morphology protein 12 of Mycosarcoma maydis (Corn smut fungus).